The chain runs to 487 residues: Histamine H1 receptor (487 aa).

The Extracellular segment spans residues Met1–Pro29. Residues Asn5 and Asn18 are each glycosylated (N-linked (GlcNAc...) asparagine). Residues Leu30–Tyr50 form a helical membrane-spanning segment. The Cytoplasmic segment spans residues Ala51–Leu64. Residues Tyr65–Leu89 traverse the membrane as a helical segment. The Extracellular portion of the chain corresponds to Met90–Arg97. Residues Pro98–Ile123 form a helical membrane-spanning segment. An intrachain disulfide couples Cys100 to Cys180. Residues Asp107 and Thr112 each coordinate histamine. The segment at Asp107–Thr112 is important for agonist binding. The Cytoplasmic segment spans residues Asp124–Ala144. Phosphothreonine is present on residues Thr140 and Thr142. A helical transmembrane segment spans residues Ser145–Gly164. Topologically, residues Trp165–Thr188 are extracellular. Residues Trp189–Ala211 form a helical membrane-spanning segment. Asn198 is a histamine binding site. Topologically, residues Lys212–Gln416 are cytoplasmic. Ser230 carries the phosphoserine modification. Residues Lys238 to Lys261 are compositionally biased toward basic and acidic residues. The disordered stretch occupies residues Lys238–Pro286. At Thr279 the chain carries Phosphothreonine. Ser344 and Ser347 each carry phosphoserine. Residues Glu345 to Gly379 form a disordered region. Residues Gly353–Thr369 are compositionally biased toward polar residues. 3 positions are modified to phosphoserine: Ser380, Ser396, and Ser398. The helical transmembrane segment at Leu417 to Phe440 threads the bilayer. Positions Phe424–Trp428 are important for agonist binding. Residue Tyr431 coordinates histamine. The cysteines at positions 441 and 444 are disulfide-linked. Topologically, residues Cys441 to Asn446 are extracellular. The helical transmembrane segment at Glu447–Pro469 threads the bilayer. The Cytoplasmic segment spans residues Leu470 to Ser487.

It belongs to the G-protein coupled receptor 1 family. Phosphorylation at sites in the second and third cytoplasmic loops independently contribute to agonist-induced receptor down-regulation.

Its subcellular location is the cell membrane. Functionally, G-protein-coupled receptor for histamine, a biogenic amine that functions as an immune modulator and a neurotransmitter. Through the H1 receptor, histamine mediates the contraction of smooth muscles and increases capillary permeability due to contraction of terminal venules. Also mediates neurotransmission in the central nervous system and thereby regulates circadian rhythms, emotional and locomotor activities as well as cognitive functions. The polypeptide is Histamine H1 receptor (Pongo pygmaeus (Bornean orangutan)).